A 562-amino-acid polypeptide reads, in one-letter code: Protein wntless (562 aa).

The Cytoplasmic segment spans residues 1-15 (MSGTILENLSGRKLS). A helical transmembrane segment spans residues 16–36 (ILVSSLMLCQVVCFLMGGLFA). The Lumenal portion of the chain corresponds to 37 to 239 (PVPAGHQTVL…AIHQNGGFTQ (203 aa)). N-linked (GlcNAc...) asparagine glycans are attached at residues asparagine 58 and asparagine 103. A helical membrane pass occupies residues 240-260 (VWLVLKTLLFPFVIGIMMWFW). Topologically, residues 261–275 (RRVHILQRSPALLEY) are cytoplasmic. The helical transmembrane segment at 276–296 (MLFYLGGALSFLNLPLELLTL) threads the bilayer. At 297–311 (GVEMPYMLLLSDVRQ) the chain is on the lumenal side. A helical transmembrane segment spans residues 312–332 (GIFYAMLLSFWLVFAGEHMLI). The Cytoplasmic portion of the chain corresponds to 333 to 344 (QDSPSKSTIRSR). The chain crosses the membrane as a helical span at residues 345–365 (YWKHLSAVVVGCISLFVFDIC). Residues 366–390 (ERGVQMRNPFYSIWTTPLGAKVAMS) lie on the Lumenal side of the membrane. A helical transmembrane segment spans residues 391-411 (FIVLAGVSAAIYFLFLCFMVW). The Cytoplasmic portion of the chain corresponds to 412 to 441 (KVFKDIGDKRTSLPSMSQARRLHYEGLIYR). The helical transmembrane segment at 442 to 462 (FKFLMLATLLCAGLTVAGFIM) threads the bilayer. Over 463–482 (GQMAEGHWKWNENIEIQLTS) the chain is Lumenal. Residues 483-503 (AFLTGVYGMWNIYIFALIILY) traverse the membrane as a helical segment. Residues 504–562 (APSHKQWPTMRHSDETTQSNENIVASAASEEIEFSNLPSDSNPSEISSLTSFTRKVAFD) lie on the Cytoplasmic side of the membrane.

It belongs to the wntless family. In terms of assembly, interacts with wg; in the Golgi. Interacts with Vps35, a component of the retromer complex; wls stability is regulated by Vps35.

It is found in the presynaptic cell membrane. It localises to the postsynaptic cell membrane. The protein localises to the cell membrane. Its subcellular location is the endoplasmic reticulum membrane. The protein resides in the endosome membrane. It is found in the golgi apparatus membrane. Its function is as follows. A segment polarity gene required for wingless (wg)-dependent patterning processes, acting in both wg-sending cells and wg-target cells. In non-neuronal cells wls directs wg secretion. The wls traffic loop encompasses the Golgi, the cell surface, an endocytic compartment and a retrograde route leading back to the Golgi, and involves clathrin-mediated endocytosis and the retromer complex (a conserved protein complex consisting of Vps35 and Vps26). In neuronal cells (the larval motorneuron NMJ), the wg signal moves across the synapse via the release of wls-containing exosome-like vesicles. Postsynaptic wls is required for the trafficking of fz2 through the fz2-interacting protein Grip. In Drosophila grimshawi (Hawaiian fruit fly), this protein is Protein wntless.